The chain runs to 124 residues: Small ribosomal subunit protein uS12 (124 aa).

D89 is subject to 3-methylthioaspartic acid.

It belongs to the universal ribosomal protein uS12 family. In terms of assembly, part of the 30S ribosomal subunit. Contacts proteins S8 and S17. May interact with IF1 in the 30S initiation complex.

Functionally, with S4 and S5 plays an important role in translational accuracy. Interacts with and stabilizes bases of the 16S rRNA that are involved in tRNA selection in the A site and with the mRNA backbone. Located at the interface of the 30S and 50S subunits, it traverses the body of the 30S subunit contacting proteins on the other side and probably holding the rRNA structure together. The combined cluster of proteins S8, S12 and S17 appears to hold together the shoulder and platform of the 30S subunit. This chain is Small ribosomal subunit protein uS12, found in Glaesserella parasuis serovar 5 (strain SH0165) (Haemophilus parasuis).